A 105-amino-acid polypeptide reads, in one-letter code: Cyclotide vibi-E (105 aa).

The first 9 residues, 1–9 (AAFALPALA), serve as a signal peptide directing secretion. A propeptide spanning residues 10 to 69 (SSFEKDVISFRAIQAVLEKRGLSKLEDDPVLSALAHTKTIISNPVIEEALLNGANLKAGN) is cleaved from the precursor. Residues 70–99 (GIPCAESCVWIPCTVTALIGCGCSNKVCYN) constitute a cross-link (cyclopeptide (Gly-Asn)). 3 disulfides stabilise this stretch: cysteine 73/cysteine 90, cysteine 77/cysteine 92, and cysteine 82/cysteine 97. Residues 100-105 (SLQTKY) constitute a propeptide that is removed on maturation.

In terms of processing, this is a cyclic peptide.

Its function is as follows. Probably participates in a plant defense mechanism. Has cytotoxic activity, active against a human lymphoma cell line with an IC(50) of 3.2 uM. This chain is Cyclotide vibi-E, found in Viola biflora (Yellow wood violet).